The chain runs to 306 residues: MISEDLKLSLYAEGCDIKQNEFLKYYTSFRIGGPVPYILFPKTLNAFVNALSQLVKRDIPFRIIGQGTNLIISDEPLKFVVLSTKYLNKMNFEEKNNMDLIVEAQSGVSLSALSFLLSEDGYSGLEFACGIPGSVGGGVYMNAGAYGGEMKDVVLETTVYDLRDGKVKTLNKGDLEFGYRTSILQEGSFILLSTKFLLKKDELKRIKSKLIDFSTRRWEKQPIDLPSAGSIFKRPKPDFFVGTTIENLGLKGFSIGEAQISTKHAGFIINKGNATFKDVISLIEYVKRIVKDKYNVDLQVEPEIWK.

The FAD-binding PCMH-type domain maps to 30-216 (RIGGPVPYIL…KSKLIDFSTR (187 aa)). Residue R180 is part of the active site. S230 functions as the Proton donor in the catalytic mechanism. E301 is a catalytic residue.

The protein belongs to the MurB family. FAD serves as cofactor.

It localises to the cytoplasm. It catalyses the reaction UDP-N-acetyl-alpha-D-muramate + NADP(+) = UDP-N-acetyl-3-O-(1-carboxyvinyl)-alpha-D-glucosamine + NADPH + H(+). It functions in the pathway cell wall biogenesis; peptidoglycan biosynthesis. Its function is as follows. Cell wall formation. The sequence is that of UDP-N-acetylenolpyruvoylglucosamine reductase from Petrotoga mobilis (strain DSM 10674 / SJ95).